The primary structure comprises 330 residues: 2-alkyl-3-oxoalkanoate reductase (330 aa).

The Proton acceptor role is filled by tyrosine 139. Position 143 (lysine 143) interacts with NADP(+).

Belongs to the 3-beta-HSD family. As to quaternary structure, homodimer.

It carries out the reaction a (2R,3S)-2-alkyl-3-hydroxyalkanoate + NADP(+) = an (R)-2-alkyl-3-oxoalkanoate + NADPH + H(+). Involved in olefin biosynthesis. Catalyzes the reversible stereospecific NADPH-dependent reduction of 2-alkyl-3-oxoalkanoic acids to 2-alkyl-3-hydroxyalkanoic acids. In the oxidative direction, syn-2-decyl-3-hydroxytetradecanoic acid is the preferred substrate. In the reductive direction, (2R/S)-2-hexyl-3-ketodecanoic acid is accepted as substrate. The protein is 2-alkyl-3-oxoalkanoate reductase of Stenotrophomonas maltophilia (strain K279a).